A 568-amino-acid chain; its full sequence is AT-rich interactive domain-containing protein 3B (568 aa).

An N-acetylmethionine modification is found at Met-1. Residues Met-1 to Gln-22 show a composition bias toward low complexity. The segment at Met-1–Trp-174 is disordered. At Ser-87 the chain carries Phosphoserine. Acidic residues predominate over residues Glu-88 to Glu-107. Basic and acidic residues predominate over residues Thr-151–Ser-160. The tract at residues Ser-201 to Leu-374 is interaction with RB1. The ARID domain occupies Asp-213–Lys-305. Ser-309 bears the Phosphoserine mark. Position 370 is an asymmetric dimethylarginine (Arg-370). The interval Ser-378–Val-403 is disordered. Residues Gly-425–Val-522 enclose the REKLES domain. Residues Ser-495–Gln-518 are interaction with ARID3A. The segment covering Thr-529–Ser-559 has biased composition (low complexity). Residues Thr-529–Leu-568 form a disordered region.

In terms of assembly, heterodimer with ARID3A. Interacts with unphosphorylated RB1. Expressed at high levels in testis. Also expressed in prostate, thyroid and thymus.

It is found in the nucleus. Transcription factor involved in the production of cranial mesenchymal tissues. Favors nuclear targeting of ARID3A. In Mus musculus (Mouse), this protein is AT-rich interactive domain-containing protein 3B (Arid3b).